A 1208-amino-acid polypeptide reads, in one-letter code: E3 ubiquitin-protein ligase DZIP3 (1208 aa).

Residues 10 to 29 (VRHPAVEDQRKEETENKLEK) are compositionally biased toward basic and acidic residues. 2 disordered regions span residues 10-38 (VRHPAVEDQRKEETENKLEKSSGQLNKQE) and 637-698 (GTSI…PHSV). Coiled coils occupy residues 14–43 (AVEDQRKEETENKLEKSSGQLNKQENDIPT), 647–676 (ESLKDLQEVKSKQRKKKKTKNKKNKDSKED), 792–853 (IASL…SKLN), and 904–939 (QLKAAVDSWNAIVADVRNKIAFLRTQYNEQINKVKQ). A compositionally biased stretch (polar residues) spans 637–647 (GTSIPSESSTE). Residues 648-657 (SLKDLQEVKS) are compositionally biased toward basic and acidic residues. Positions 658 to 669 (KQRKKKKTKNKK) are enriched in basic residues. Residues 670–693 (NKDSKEDQVPYVVEKEEQLRKEQA) are compositionally biased toward basic and acidic residues. Residues 1088-1145 (KSQSQGKSVSNVNCVSPSHSPSQPDAAQPPKPAWRPLTSQGPATWEGASNPDEEEEEE) are disordered. The span at 1089 to 1112 (SQSQGKSVSNVNCVSPSHSPSQPD) shows a compositional bias: polar residues. The RING-type; atypical zinc finger occupies 1148–1188 (CVICHENLSPENLSVLPCAHKFHAQCIRPWLMQQGTCPTCR).

Interacts with DAZ proteins. Widely expressed at low level. Highly expressed in skeletal muscle, kidney and heart. Expressed at low level in placenta, lung, brain, liver and pancreas.

The protein localises to the cytoplasm. The catalysed reaction is S-ubiquitinyl-[E2 ubiquitin-conjugating enzyme]-L-cysteine + [acceptor protein]-L-lysine = [E2 ubiquitin-conjugating enzyme]-L-cysteine + N(6)-ubiquitinyl-[acceptor protein]-L-lysine.. The protein operates within protein modification; protein ubiquitination. Functionally, E3 Ubiquitin ligase proteins mediate ubiquitination and subsequent proteasomal degradation of target proteins. E3 ubiquitin ligases accept ubiquitin from an E2 ubiquitin-conjugating enzyme in the form of a thioester and then directly transfers the ubiquitin to targeted substrates. Able to specifically bind RNA. The sequence is that of E3 ubiquitin-protein ligase DZIP3 (DZIP3) from Homo sapiens (Human).